The primary structure comprises 628 residues: Leucine-rich repeat and fibronectin type-III domain-containing protein 3 (628 aa).

Positions 1 to 16 are cleaved as a signal peptide; the sequence is MAILPLLLCLLPLAPA. Over 17 to 539 the chain is Extracellular; the sequence is SSPPQSATPS…PHAPFLGGTM (523 aa). An LRRNT domain is found at 19 to 59; that stretch reads PPQSATPSPCPRRCRCQTQSLPLSVLCPGAGLLFVPPSLDR. LRR repeat units lie at residues 60–83, 84–105, 108–129, 132–153, 157–178, 181–202, and 205–226; these read RAAELRLADNFIASVRRRDLANMT, GLLHLSLSRNTIRHVAAGAFAD, ALRALHLDGNRLTSLGEGQLRG, NLRHLILSNNQLAALAAGALDD, TLEDLDLSYNNLEQLPWEALGR, NVNTLGLDHNLLASVPAGAFSR, and KLARLDMTSNRLTTIPPDPLFS. The N-linked (GlcNAc...) asparagine glycan is linked to Asn81. The region spanning 249 to 295 is the LRRCT domain; it reads NPLHCNCELVWLRRLAREDDLEACASPPALGGRYFWAVGEEEFVCEP. The Ig-like domain occupies 295-382; the sequence is PPVVTHRSPP…GEATAAVELT (88 aa). Residues Cys317 and Cys366 are joined by a disulfide bond. N-linked (GlcNAc...) asparagine glycans are attached at residues Asn339, Asn348, and Asn393. The interval 382 to 430 is disordered; that stretch reads TVGPPPPPQLANSTSCDPPRDGDPDALTPPSAASASAKVADTGPPTDRG. Low complexity predominate over residues 406-422; the sequence is DALTPPSAASASAKVAD. Residues 425–523 form the Fibronectin type-III domain; that stretch reads PPTDRGVQVT…GCARFSTEPA (99 aa). A glycan (N-linked (GlcNAc...) asparagine) is linked at Asn462. Residues 540-560 form a helical membrane-spanning segment; sequence IIALGGVIVASVLVFIFVLLM. Over 561–628 the chain is Cytoplasmic; sequence RYKVHGGQPP…WGPGHEPVGP (68 aa).

The protein belongs to the LRFN family. As to quaternary structure, can form heteromeric complexes with LRFN1, LRFN2, LRFN4 and LRFN5. Able to form homomeric complexes across cell junctions, between adjacent cells. Does not interact with DLG4. N-glycosylated.

The protein localises to the cell membrane. Its subcellular location is the cell projection. It is found in the axon. It localises to the dendrite. The protein resides in the synapse. The protein localises to the presynaptic cell membrane. Its subcellular location is the postsynaptic cell membrane. In terms of biological role, cell adhesion molecule that mediates homophilic cell-cell adhesion in a Ca(2+)-independent manner. Promotes neurite outgrowth in hippocampal neurons. In Homo sapiens (Human), this protein is Leucine-rich repeat and fibronectin type-III domain-containing protein 3 (LRFN3).